We begin with the raw amino-acid sequence, 1338 residues long: Centrosomal P4.1-associated protein (1338 aa).

Residues 190–211 (GLSLLPDDQSQKHRSPGNTTTG) form a disordered region. Phosphoserine is present on residues Ser-260 and Ser-316. The tract at residues 319-394 (VANIEERPIK…FTNAKSKFQK (76 aa)) is alpha/beta-tubulin binding. Disordered regions lie at residues 386-414 (TNAK…PLFK), 436-479 (PILK…QTGK), and 521-551 (QGKD…ESES). Residues 400–409 (LVTNQSTSED) show a composition bias toward polar residues. Ser-540 is subject to Phosphoserine. A compositionally biased stretch (basic and acidic residues) spans 541–550 (PIRETMKESE). Phosphoserine; by PLK2 is present on Ser-589. Ser-595 carries the post-translational modification Phosphoserine; by PLK2 and PLK4. Disordered regions lie at residues 611–789 (HRMS…LSLS), 845–865 (VKRG…TSEL), and 1096–1153 (YLPM…QGEI). Positions 635 to 650 (NRSEDLDHTAREKESE) are enriched in basic and acidic residues. The segment covering 679-689 (QKSTSENQTEW) has biased composition (polar residues). Basic and acidic residues predominate over residues 717-764 (STEDRERGISSREDSPQVCDDKGPFKDTRTQEDKRRDVDLDLSDKDYS). Ser-759 is subject to Phosphoserine. The segment at 895–1338 (QPPGDNARSQ…EGNVLMDTEL (444 aa)) is interaction with STIL. A compositionally biased stretch (acidic residues) spans 1140–1149 (YKEEEEDQDI).

The protein belongs to the TCP10 family. As to quaternary structure, forms homodimers. Associates with microtubules plus ends; binds to beta-tubulin subunits exposed on microtubule outer surface at its distal tip; also associates with microtubule lattice. Associated with the gamma-tubulin complex. Interacts with the head domain of EPB41. Interacts with LYST. Interacts with CEP152 (via C-terminus). Interacts with STIL. Forms a complex with STIL and SASS6. Phosphorylation at Ser-589 and Ser-595 by PLK2 is required for procentriole formation and centriole elongation. Phosphorylation by PLK2 oscillates during the cell cycle: it increases at G1/S transition and decreases during the exit from mitosis. Phosphorylation at Ser-595 is also mediated by PLK4 but is not a critical step in PLK4 function in procentriole assembly.

The protein resides in the cytoplasm. Its subcellular location is the cytoskeleton. The protein localises to the microtubule organizing center. It localises to the centrosome. It is found in the centriole. Plays an important role in cell division and centrosome function by participating in centriole duplication. Inhibits microtubule nucleation from the centrosome. Involved in the regulation of slow processive growth of centriolar microtubules. Acts as a microtubule plus-end tracking protein that stabilizes centriolar microtubules and inhibits microtubule polymerization and extension from the distal ends of centrioles. Required for centriole elongation and for STIL-mediated centriole amplification. Required for the recruitment of CEP295 to the proximal end of new-born centrioles at the centriolar microtubule wall during early S phase in a PLK4-dependent manner. May be involved in the control of centriolar-microtubule growth by acting as a regulator of tubulin release. This chain is Centrosomal P4.1-associated protein, found in Homo sapiens (Human).